A 340-amino-acid chain; its full sequence is Phosphatidylglycerol--prolipoprotein diacylglyceryl transferase (340 aa).

Transmembrane regions (helical) follow at residues 19–39, 54–74, 93–113, and 119–139; these read IPLR…VWLG, ADIA…YHVI, IWEG…GAWI, and GIPL…AQAF. A 1,2-diacyl-sn-glycero-3-phospho-(1'-sn-glycerol) is bound at residue R141. A run of 3 helical transmembrane segments spans residues 176-196, 202-221, and 238-258; these read HPTF…VIWA, LGHG…GRAW, and LNDW…VLSS. The interval 266-340 is disordered; it reads EIVEPGASDT…ESAAESAKKV (75 aa). Residues 284–294 are compositionally biased toward basic and acidic residues; it reads DLGKDEDKATT. Over residues 295-307 the composition is skewed to low complexity; that stretch reads DKATATDTSTTTD. Basic and acidic residues predominate over residues 326-340; the sequence is PSEKTESAAESAKKV.

The protein belongs to the Lgt family.

It localises to the cell membrane. The enzyme catalyses L-cysteinyl-[prolipoprotein] + a 1,2-diacyl-sn-glycero-3-phospho-(1'-sn-glycerol) = an S-1,2-diacyl-sn-glyceryl-L-cysteinyl-[prolipoprotein] + sn-glycerol 1-phosphate + H(+). Its pathway is protein modification; lipoprotein biosynthesis (diacylglyceryl transfer). Functionally, catalyzes the transfer of the diacylglyceryl group from phosphatidylglycerol to the sulfhydryl group of the N-terminal cysteine of a prolipoprotein, the first step in the formation of mature lipoproteins. The chain is Phosphatidylglycerol--prolipoprotein diacylglyceryl transferase from Streptomyces avermitilis (strain ATCC 31267 / DSM 46492 / JCM 5070 / NBRC 14893 / NCIMB 12804 / NRRL 8165 / MA-4680).